The following is a 72-amino-acid chain: Large ribosomal subunit protein uL29 (72 aa).

It belongs to the universal ribosomal protein uL29 family.

The protein is Large ribosomal subunit protein uL29 (rpmC) of Chlamydia muridarum (strain MoPn / Nigg).